The sequence spans 490 residues: Patellin-3 (490 aa).

The span at 1-17 (MAEEPTTTTLVTPEKLP) shows a compositional bias: low complexity. A disordered region spans residues 1–121 (MAEEPTTTTL…ESSKLSDLSN (121 aa)). The residue at position 2 (Ala-2) is an N-acetylalanine. The segment covering 19 to 33 (PSLTPSEVSESTQDA) has biased composition (polar residues). The segment covering 46–56 (ETNPPETADTT) has biased composition (low complexity). Basic and acidic residues-rich tracts occupy residues 57–69 (TKPE…EHHP) and 79–100 (STEK…EKKS). Ser-108 is modified (phosphoserine). A compositionally biased stretch (basic and acidic residues) spans 109–121 (FKEESSKLSDLSN). Residue Lys-193 forms a Glycyl lysine isopeptide (Lys-Gly) (interchain with G-Cter in ubiquitin) linkage. A CRAL-TRIO domain is found at 202–377 (EEDLVDDLDK…QYGGLSVDPC (176 aa)). The region spanning 353-487 (AETLFKYISP…KKKLVYRFNV (135 aa)) is the GOLD domain.

The protein belongs to the patellin family.

It is found in the membrane. It localises to the cytoplasm. In terms of biological role, carrier protein that may be involved in membrane-trafficking events associated with cell plate formation during cytokinesis. Binds to some hydrophobic molecules such as phosphoinositides and promotes their transfer between the different cellular sites. This Arabidopsis thaliana (Mouse-ear cress) protein is Patellin-3 (PATL3).